The chain runs to 915 residues: Alanine--tRNA ligase (915 aa).

Zn(2+) is bound by residues histidine 609, histidine 613, cysteine 712, and histidine 716.

Belongs to the class-II aminoacyl-tRNA synthetase family. Zn(2+) is required as a cofactor.

The protein resides in the cytoplasm. It catalyses the reaction tRNA(Ala) + L-alanine + ATP = L-alanyl-tRNA(Ala) + AMP + diphosphate. Functionally, catalyzes the attachment of alanine to tRNA(Ala) in a two-step reaction: alanine is first activated by ATP to form Ala-AMP and then transferred to the acceptor end of tRNA(Ala). Also edits incorrectly charged Ser-tRNA(Ala) and Gly-tRNA(Ala) via its editing domain. The protein is Alanine--tRNA ligase of Methanoculleus marisnigri (strain ATCC 35101 / DSM 1498 / JR1).